A 366-amino-acid polypeptide reads, in one-letter code: Tetraacyldisaccharide 4'-kinase (366 aa).

51 to 58 is a binding site for ATP; that stretch reads TVGGTGKT.

It belongs to the LpxK family.

It carries out the reaction a lipid A disaccharide + ATP = a lipid IVA + ADP + H(+). Its pathway is glycolipid biosynthesis; lipid IV(A) biosynthesis; lipid IV(A) from (3R)-3-hydroxytetradecanoyl-[acyl-carrier-protein] and UDP-N-acetyl-alpha-D-glucosamine: step 6/6. Its function is as follows. Transfers the gamma-phosphate of ATP to the 4'-position of a tetraacyldisaccharide 1-phosphate intermediate (termed DS-1-P) to form tetraacyldisaccharide 1,4'-bis-phosphate (lipid IVA). The sequence is that of Tetraacyldisaccharide 4'-kinase from Phocaeicola vulgatus (strain ATCC 8482 / DSM 1447 / JCM 5826 / CCUG 4940 / NBRC 14291 / NCTC 11154) (Bacteroides vulgatus).